A 508-amino-acid polypeptide reads, in one-letter code: Histidine ammonia-lyase (508 aa).

The 5-imidazolinone (Ala-Gly) cross-link spans 139-141; it reads ASG. Residue Ser140 is modified to 2,3-didehydroalanine (Ser).

The protein belongs to the PAL/histidase family. Post-translationally, contains an active site 4-methylidene-imidazol-5-one (MIO), which is formed autocatalytically by cyclization and dehydration of residues Ala-Ser-Gly.

The protein localises to the cytoplasm. It carries out the reaction L-histidine = trans-urocanate + NH4(+). It functions in the pathway amino-acid degradation; L-histidine degradation into L-glutamate; N-formimidoyl-L-glutamate from L-histidine: step 1/3. This Acidiphilium cryptum (strain JF-5) protein is Histidine ammonia-lyase.